A 708-amino-acid chain; its full sequence is MTHPNLLVELFVEELPPKALQKLGDAFAGVLLAQLQAQGLASAASRVTAYASPRRLAAHVTEVAPQAADKAVSQKLMPVTVGLDASGNATPALLKKLAALGADASAVPGLRRAPDGKAEALFLDSTVRGATLSEGLQKALQESVAKLPIPKVMRYQLSSGCEQPGWTSVSFVRPAHGLVALHGTEVLLSVSVLGLTAGNATHGHRFEAAVDPVVIRSADTYAQQLAEEGAVIAAFADRRAEIARQLQAAAEQVGGGVRPIQDDALLDEVTALVERPNVLVCEFEKQFLDVPQECLILTMKANQKYFPLLDAEGRLTHRFLVVSNIRPDDASAVVGGNERVVRPRLADAKFFFDQDRKKTLESRVASLAKVVYHNQLGTQGERVERVRAIARAIAQQIGDVELARQADQAAQLAKADLVTDMVGEFPELQGTMGRYYAQADGLPAEVADAIEDHYKPRFAGDTLPRGDVGVVVALADKLETLVGMFGIGNLPTGDRDPFALRRHALGVIRMLVEKELPLDLETLLHSALPAFGDKIQDPTASLADFIYDRLAGSLREQGYSAQEVDAVLALRPQRLALVGKQLAAVRAFAALPEAPALAAANKRVTNILKKAGDVDAHVNPDLLREQAEKDLYAALQRFVPEADALFAAGDYTGSLQTLAVLRAPVDAFFDDVMVNAEELDLRLNRQGLLQSLHVAMNRVADLSRLAVA.

The protein belongs to the class-II aminoacyl-tRNA synthetase family. In terms of assembly, tetramer of two alpha and two beta subunits.

The protein resides in the cytoplasm. It carries out the reaction tRNA(Gly) + glycine + ATP = glycyl-tRNA(Gly) + AMP + diphosphate. The polypeptide is Glycine--tRNA ligase beta subunit (Paracidovorax citrulli (strain AAC00-1) (Acidovorax citrulli)).